Here is a 508-residue protein sequence, read N- to C-terminus: TATA box-binding protein-like 1 (508 aa).

3 disordered regions span residues 145–190, 236–262, and 456–479; these read QISY…QMHH, EPIP…PMPD, and QKKR…FDDS.

This sequence belongs to the TBP family.

It localises to the nucleus. May be a general transcription factor. Plays an essential role for RNA polymerase II/ama-1 transcription in early embryos whereby it activates a subset of RNA polymerase II promoters and facilitates the reestablishment of transcription after mitosis. The polypeptide is TATA box-binding protein-like 1 (Caenorhabditis elegans).